We begin with the raw amino-acid sequence, 85 residues long: MAEITEVRIYKSKGNGSVKAYASVSFDNEFVVKGLKVVEGEKGLWVSMPSRRMKDGSFQDVFHPVSREARDKIVDAVLKAYQEQE.

Belongs to the SpoVG family.

In terms of biological role, could be involved in septation. This is Putative septation protein SpoVG from Archaeoglobus fulgidus (strain ATCC 49558 / DSM 4304 / JCM 9628 / NBRC 100126 / VC-16).